A 1677-amino-acid polypeptide reads, in one-letter code: Pentafunctional AROM polypeptide (1677 aa).

The 3-dehydroquinate synthase stretch occupies residues 1–394 (MAVADDTKAD…YEQKASIVED (394 aa)). Residues 50–52 (DDN), 89–92 (ETSK), 120–122 (GGV), and Asp125 contribute to the NAD(+) site. Arg136 contributes to the 7-phospho-2-dehydro-3-deoxy-D-arabino-heptonate binding site. 145-146 (TT) is a binding site for NAD(+). Residues Asp152 and Lys158 each contribute to the 7-phospho-2-dehydro-3-deoxy-D-arabino-heptonate site. Residue Lys167 coordinates NAD(+). A 7-phospho-2-dehydro-3-deoxy-D-arabino-heptonate-binding site is contributed by Asn168. NAD(+)-binding positions include 185 to 188 (YLET) and Asn196. Glu200 contacts Zn(2+). 7-phospho-2-dehydro-3-deoxy-D-arabino-heptonate contacts are provided by residues 200–203 (EVVK) and Lys260. The active-site Proton acceptor; for 3-dehydroquinate synthase activity is Glu270. Residues 274–278 (RNLVN) and His281 each bind 7-phospho-2-dehydro-3-deoxy-D-arabino-heptonate. A Zn(2+)-binding site is contributed by His281. His285 functions as the Proton acceptor; for 3-dehydroquinate synthase activity in the catalytic mechanism. Positions 297 and 366 each coordinate 7-phospho-2-dehydro-3-deoxy-D-arabino-heptonate. Residue His297 coordinates Zn(2+). The segment at 407 to 858 (VVPSIPTGNV…WDDLENKIGI (452 aa)) is EPSP synthase. Cys840 serves as the catalytic For EPSP synthase activity. The shikimate kinase stretch occupies residues 885 to 1113 (NSSILLIGMR…GQQRRTYFLC (229 aa)). 892–899 (GMRGTGKT) serves as a coordination point for ATP. The 3-dehydroquinase stretch occupies residues 1114-1341 (LTYPDVRHAF…AAPGQLSFKQ (228 aa)). The active-site Proton acceptor; for 3-dehydroquinate dehydratase activity is the His1243. Lys1271 acts as the Schiff-base intermediate with substrate; for 3-dehydroquinate dehydratase activity in catalysis. Positions 1354 to 1677 (SKHFHLFGTP…TRVWEKYGEV (324 aa)) are shikimate dehydrogenase.

It in the N-terminal section; belongs to the sugar phosphate cyclases superfamily. Dehydroquinate synthase family. The protein in the 2nd section; belongs to the EPSP synthase family. In the 3rd section; belongs to the shikimate kinase family. This sequence in the 4th section; belongs to the type-I 3-dehydroquinase family. It in the C-terminal section; belongs to the shikimate dehydrogenase family. Homodimer. Requires Zn(2+) as cofactor.

Its subcellular location is the cytoplasm. The catalysed reaction is 7-phospho-2-dehydro-3-deoxy-D-arabino-heptonate = 3-dehydroquinate + phosphate. It carries out the reaction 3-dehydroquinate = 3-dehydroshikimate + H2O. It catalyses the reaction shikimate + NADP(+) = 3-dehydroshikimate + NADPH + H(+). The enzyme catalyses shikimate + ATP = 3-phosphoshikimate + ADP + H(+). The catalysed reaction is 3-phosphoshikimate + phosphoenolpyruvate = 5-O-(1-carboxyvinyl)-3-phosphoshikimate + phosphate. The protein operates within metabolic intermediate biosynthesis; chorismate biosynthesis; chorismate from D-erythrose 4-phosphate and phosphoenolpyruvate: step 2/7. It functions in the pathway metabolic intermediate biosynthesis; chorismate biosynthesis; chorismate from D-erythrose 4-phosphate and phosphoenolpyruvate: step 3/7. Its pathway is metabolic intermediate biosynthesis; chorismate biosynthesis; chorismate from D-erythrose 4-phosphate and phosphoenolpyruvate: step 4/7. It participates in metabolic intermediate biosynthesis; chorismate biosynthesis; chorismate from D-erythrose 4-phosphate and phosphoenolpyruvate: step 5/7. The protein operates within metabolic intermediate biosynthesis; chorismate biosynthesis; chorismate from D-erythrose 4-phosphate and phosphoenolpyruvate: step 6/7. Functionally, the AROM polypeptide catalyzes 5 consecutive enzymatic reactions in prechorismate polyaromatic amino acid biosynthesis. The protein is Pentafunctional AROM polypeptide of Coprinopsis cinerea (strain Okayama-7 / 130 / ATCC MYA-4618 / FGSC 9003) (Inky cap fungus).